The following is a 614-amino-acid chain: Heat shock protein SSB1 (614 aa).

The segment at 1-392 is nucleotide binding domain (NBD); the sequence is MSTEVYDGAI…ILSGKATSAE (392 aa). Residues 16–18, lysine 74, 206–208, 272–279, and glycine 343 contribute to the ATP site; these read TTY, GGT, and ERAKRTLS. The tract at residues 393-403 is inter-domain linker; the sequence is TADLLLLDVVP. Positions 404–614 are substrate binding domain (SBD); sequence LSLGVAMEGN…RAVTKAMSSR (211 aa). The segment at 517–613 is lid domain (SBDalpha); sequence TSEIENMISE…KRAVTKAMSS (97 aa). The Nuclear export signal motif lies at 575–583; the sequence is IENTMSEAM.

The protein belongs to the heat shock protein 70 family. Interacts with HAT1 in starvation conditions.

Its subcellular location is the nucleus. The protein resides in the cytoplasm. It catalyses the reaction ATP + H2O = ADP + phosphate + H(+). Chaperone that interacts with the histone acetyltransferase HAT1 and mediates its translocation from the nucleus to the cytoplasm during germination and starvation conditions. Within the cytoplasm, HAT1 regulates autophagy via acetylation of the autophagy-related proteins ATG3 and ATG9. This chain is Heat shock protein SSB1, found in Pyricularia oryzae (strain 70-15 / ATCC MYA-4617 / FGSC 8958) (Rice blast fungus).